We begin with the raw amino-acid sequence, 833 residues long: Leucine--tRNA ligase (833 aa).

Residues 41 to 52 (PYPSGAGLHVGH) carry the 'HIGH' region motif. Positions 610 to 614 (KMSKS) match the 'KMSKS' region motif. Residue Lys613 coordinates ATP.

Belongs to the class-I aminoacyl-tRNA synthetase family.

It is found in the cytoplasm. It carries out the reaction tRNA(Leu) + L-leucine + ATP = L-leucyl-tRNA(Leu) + AMP + diphosphate. This chain is Leucine--tRNA ligase, found in Streptococcus equi subsp. equi (strain 4047).